The sequence spans 289 residues: Phosphate import ATP-binding protein PstB 2 (289 aa).

One can recognise an ABC transporter domain in the interval 37–276; the sequence is LHAKVEAFYY…HTPVIFQNPT (240 aa). Residue 69-76 coordinates ATP; the sequence is GPSGCGKS.

The protein belongs to the ABC transporter superfamily. Phosphate importer (TC 3.A.1.7) family. In terms of assembly, the complex is composed of two ATP-binding proteins (PstB), two transmembrane proteins (PstC and PstA) and a solute-binding protein (PstS).

The protein localises to the cell inner membrane. The catalysed reaction is phosphate(out) + ATP + H2O = ADP + 2 phosphate(in) + H(+). In terms of biological role, part of the ABC transporter complex PstSACB involved in phosphate import. Responsible for energy coupling to the transport system. The polypeptide is Phosphate import ATP-binding protein PstB 2 (Trichormus variabilis (strain ATCC 29413 / PCC 7937) (Anabaena variabilis)).